A 551-amino-acid chain; its full sequence is Cilia- and flagella-associated protein 45 (551 aa).

3 disordered regions span residues 1–52 (MPLR…KSDS), 232–256 (MEIDRRESLQRQEDRERKRREERVR), and 385–415 (EQDALRAKRNQEVADREWRRKEKENAQKKIE). Residues 8 to 18 (ASSSASTASNR) show a composition bias toward low complexity. A coiled-coil region spans residues 276-524 (AEHREQEKEQ…EDIKKQKLEE (249 aa)). Over residues 387-415 (DALRAKRNQEVADREWRRKEKENAQKKIE) the composition is skewed to basic and acidic residues.

This sequence belongs to the CFAP45 family. As to quaternary structure, microtubule inner protein component of sperm flagellar doublet microtubules. Interacts with AK8; dimerization with AK8 may create a cavity at the interface of the dimer that can accommodate AMP. Interacts with CFAP52. Interacts with ENKUR. Directly interacts with DNALI1. Interacts with DNAH11. Interacts with DNAI1. In terms of tissue distribution, expressed in respiratory cells and in sperm (at protein level).

Its subcellular location is the cytoplasm. It localises to the cytoskeleton. The protein resides in the cilium axoneme. The protein localises to the flagellum axoneme. It is found in the cell projection. Its subcellular location is the cilium. It localises to the flagellum. Functionally, microtubule inner protein (MIP) part of the dynein-decorated doublet microtubules (DMTs) in cilia axoneme, which is required for motile cilia beating. It is an AMP-binding protein that may facilitate dynein ATPase-dependent ciliary and flagellar beating via adenine nucleotide homeostasis. May function as a donor of AMP to AK8 and hence promote ADP production. The chain is Cilia- and flagella-associated protein 45 (Cfap45) from Mus musculus (Mouse).